Reading from the N-terminus, the 80-residue chain is Acyl carrier protein (80 aa).

The region spanning 2–77 (SDTLKRLQKI…DALNYIENKI (76 aa)) is the Carrier domain. Ser37 is subject to O-(pantetheine 4'-phosphoryl)serine.

The protein belongs to the acyl carrier protein (ACP) family. In terms of processing, 4'-phosphopantetheine is transferred from CoA to a specific serine of apo-ACP by AcpS. This modification is essential for activity because fatty acids are bound in thioester linkage to the sulfhydryl of the prosthetic group.

The protein localises to the plastid. The protein resides in the chloroplast. It participates in lipid metabolism; fatty acid biosynthesis. Functionally, carrier of the growing fatty acid chain in fatty acid biosynthesis. This Cylindrotheca sp. (strain N1) (Marine diatom) protein is Acyl carrier protein.